The chain runs to 114 residues: FK506-binding protein 1 (114 aa).

Serine 2 is subject to N-acetylserine. The PPIase FKBP-type domain maps to 26–114 (GDLVTIHYTG…VFDVELLKVN (89 aa)). The residue at position 51 (serine 51) is a Phosphoserine.

This sequence belongs to the FKBP-type PPIase family. FKBP1 subfamily. In terms of assembly, interacts with HOM3; the interaction is direct, plays a role in feedback inhibition of aspartokinase by threonine, and is inhibited by tacrolimus and sirolimus. Interacts with HMO1. Interacts with FAP1.

It localises to the cytoplasm. It is found in the mitochondrion. The enzyme catalyses [protein]-peptidylproline (omega=180) = [protein]-peptidylproline (omega=0). PPIases accelerate the folding of proteins. It catalyzes the cis-trans isomerization of proline imidic peptide bonds in oligopeptides. Plays a role in feedback inhibition of the pathway synthesizing the aspartate family of amino acids by binding to aspartokinase. This is FK506-binding protein 1 (FPR1) from Saccharomyces cerevisiae (strain ATCC 204508 / S288c) (Baker's yeast).